The following is a 99-amino-acid chain: Aspartyl/glutamyl-tRNA(Asn/Gln) amidotransferase subunit C (99 aa).

Belongs to the GatC family. As to quaternary structure, heterotrimer of A, B and C subunits.

It carries out the reaction L-glutamyl-tRNA(Gln) + L-glutamine + ATP + H2O = L-glutaminyl-tRNA(Gln) + L-glutamate + ADP + phosphate + H(+). It catalyses the reaction L-aspartyl-tRNA(Asn) + L-glutamine + ATP + H2O = L-asparaginyl-tRNA(Asn) + L-glutamate + ADP + phosphate + 2 H(+). Its function is as follows. Allows the formation of correctly charged Asn-tRNA(Asn) or Gln-tRNA(Gln) through the transamidation of misacylated Asp-tRNA(Asn) or Glu-tRNA(Gln) in organisms which lack either or both of asparaginyl-tRNA or glutaminyl-tRNA synthetases. The reaction takes place in the presence of glutamine and ATP through an activated phospho-Asp-tRNA(Asn) or phospho-Glu-tRNA(Gln). This chain is Aspartyl/glutamyl-tRNA(Asn/Gln) amidotransferase subunit C, found in Burkholderia cenocepacia (strain ATCC BAA-245 / DSM 16553 / LMG 16656 / NCTC 13227 / J2315 / CF5610) (Burkholderia cepacia (strain J2315)).